The following is a 334-amino-acid chain: Ketol-acid reductoisomerase (NADP(+)) (334 aa).

The region spanning 1 to 181 (MTTVYYDQSV…GATRAGVLET (181 aa)) is the KARI N-terminal Rossmann domain. Residues 25 to 28 (YGSQ), Arg-48, Ser-52, and 82 to 85 (DEIQ) each bind NADP(+). Residue His-107 is part of the active site. Gly-133 provides a ligand contact to NADP(+). Residues 182-327 (SFKEETETDL…RELRDMMPFI (146 aa)) enclose the KARI C-terminal knotted domain. Positions 190, 194, 226, and 230 each coordinate Mg(2+). Residue Ser-251 coordinates substrate.

This sequence belongs to the ketol-acid reductoisomerase family. Mg(2+) is required as a cofactor.

It catalyses the reaction (2R)-2,3-dihydroxy-3-methylbutanoate + NADP(+) = (2S)-2-acetolactate + NADPH + H(+). The catalysed reaction is (2R,3R)-2,3-dihydroxy-3-methylpentanoate + NADP(+) = (S)-2-ethyl-2-hydroxy-3-oxobutanoate + NADPH + H(+). It participates in amino-acid biosynthesis; L-isoleucine biosynthesis; L-isoleucine from 2-oxobutanoate: step 2/4. The protein operates within amino-acid biosynthesis; L-valine biosynthesis; L-valine from pyruvate: step 2/4. Involved in the biosynthesis of branched-chain amino acids (BCAA). Catalyzes an alkyl-migration followed by a ketol-acid reduction of (S)-2-acetolactate (S2AL) to yield (R)-2,3-dihydroxy-isovalerate. In the isomerase reaction, S2AL is rearranged via a Mg-dependent methyl migration to produce 3-hydroxy-3-methyl-2-ketobutyrate (HMKB). In the reductase reaction, this 2-ketoacid undergoes a metal-dependent reduction by NADPH to yield (R)-2,3-dihydroxy-isovalerate. The protein is Ketol-acid reductoisomerase (NADP(+)) of Staphylococcus saprophyticus subsp. saprophyticus (strain ATCC 15305 / DSM 20229 / NCIMB 8711 / NCTC 7292 / S-41).